Reading from the N-terminus, the 480-residue chain is Glycogen synthase (480 aa).

Residue lysine 15 coordinates ADP-alpha-D-glucose.

Belongs to the glycosyltransferase 1 family. Bacterial/plant glycogen synthase subfamily.

It catalyses the reaction [(1-&gt;4)-alpha-D-glucosyl](n) + ADP-alpha-D-glucose = [(1-&gt;4)-alpha-D-glucosyl](n+1) + ADP + H(+). It functions in the pathway glycan biosynthesis; glycogen biosynthesis. Synthesizes alpha-1,4-glucan chains using ADP-glucose. The chain is Glycogen synthase from Rhizobium leguminosarum bv. trifolii (strain WSM2304).